A 969-amino-acid chain; its full sequence is Chromosome transmission fidelity protein 18 homolog (969 aa).

A disordered region spans residues 30-97 (EGTRDQAPPG…APSSPMVKRP (68 aa)). T51 bears the Phosphothreonine mark. S221 is subject to Phosphoserine. Disordered regions lie at residues 250–269 (SEGEEAVLEGPPAEEPAPGQ) and 318–340 (RKPRPGVETTRVGKEATAPGKWK). The span at 257–268 (LEGPPAEEPAPG) shows a compositional bias: low complexity. Residue 369-376 (GPPGLGKT) coordinates ATP. A disordered region spans residues 856–889 (ARSGPQVDQGSSGPASLWTDSGEKGTRQPAPRNH). Residues 876-889 (SGEKGTRQPAPRNH) are compositionally biased toward basic and acidic residues.

This sequence belongs to the activator 1 small subunits family. CTF18 subfamily. As to quaternary structure, component of the CTF18-RFC complex, which consists of CTF18, CTF8, DCC1, RFC2, RFC3, RFC4 and RFC5. During assembly of the CTF18-RFC complex, CTF18 may first assemble into a subcomplex with RFC2, RFC3, RFC4 and RFC5. CTF18 then interacts directly with CTF8, which in turn interacts with DCC1. The CTF18-RFC complex associates with PCNA and with DNA polymerase POLH. The CTF18-RFC complex does not interact with the Rad9/Rad1/Hus1 complex. CTF18 interacts with SMC1A and RAD21. Interacts with DDX11.

Its subcellular location is the nucleus. In terms of biological role, chromosome cohesion factor involved in sister chromatid cohesion and fidelity of chromosome transmission. Component of one of the cell nuclear antigen loader complexes, CTF18-replication factor C (CTF18-RFC), which consists of CTF18, CTF8, DCC1, RFC2, RFC3, RFC4 and RFC5. The CTF18-RFC complex binds to single-stranded and primed DNAs and has weak ATPase activity that is stimulated by the presence of primed DNA, replication protein A (RPA) and by proliferating cell nuclear antigen (PCNA). The CTF18-RFC complex catalyzes the ATP-dependent loading of PCNA onto primed and gapped DNA. Interacts with and stimulates DNA polymerase POLH. During DNA repair synthesis, involved in loading DNA polymerase POLE at the sites of local damage. The chain is Chromosome transmission fidelity protein 18 homolog (Chtf18) from Mus musculus (Mouse).